The chain runs to 226 residues: Endonuclease NucS (226 aa).

It belongs to the NucS endonuclease family.

It is found in the cytoplasm. Cleaves both 3' and 5' ssDNA extremities of branched DNA structures. This chain is Endonuclease NucS, found in Mycobacterium ulcerans (strain Agy99).